The chain runs to 940 residues: PTS system glucose-specific EIICBA component (940 aa).

The PTS EIIC type-1; first part domain maps to 1–284; the sequence is MQIKAQDTGQ…YAPLWYTSAG (284 aa). 5 helical membrane-spanning segments follow: residues 43–63, 83–103, 112–132, 175–195, and 209–229; these read LMIPIAVLPIAGIFLGVGDAI, GGDVVFANLPILFAIAIAITF, FSAFVFWAAMNGFMSSLILPF, VFGGIIVGALTSVLYKKFYAI, and FVPIICFVVAIPVALILLMIW. Residues 285–478 are unknown; sequence GSLQEIVNQQ…VNSFRVAVES (194 aa). A PTS EIIC type-1; second part domain is found at 479 to 630; the sequence is LNPAQYSQGK…FNLATPGRGG (152 aa). The next 5 membrane-spanning stretches (helical) occupy residues 487-507, 515-535, 537-557, 564-584, and 598-618; these read GKFPFMLFGIPAAGVAMILAA, AASIVGSAAFTSFLTGITEPF, FTFLFLAPWLFYGVHAVLAAV, ILGANVGQTFSGSFIDFILYG, and LVPIIGLFLAAIYFPTFYFLI. In terms of domain architecture, PTS EIIB type-1 spans 661 to 743; the sequence is QIEAGILLQA…QDIIQGKVNW (83 aa). Cysteine 683 acts as the Phosphocysteine intermediate; for EIIB activity in catalysis. A PTS EIIA type-1 domain is found at 794 to 907; sequence DETFKQKLVG…NPITPFVVMK (114 aa). Residue histidine 847 is the Tele-phosphohistidine intermediate; for EIIA activity of the active site.

Its subcellular location is the cell membrane. It catalyses the reaction N(pros)-phospho-L-histidyl-[protein] + D-glucose(out) = D-glucose 6-phosphate(in) + L-histidyl-[protein]. Functionally, the phosphoenolpyruvate-dependent sugar phosphotransferase system (sugar PTS), a major carbohydrate active transport system, catalyzes the phosphorylation of incoming sugar substrates concomitantly with their translocation across the cell membrane. This system is involved in glucose transport. The polypeptide is PTS system glucose-specific EIICBA component (ptsG) (Mycoplasma pneumoniae (strain ATCC 29342 / M129 / Subtype 1) (Mycoplasmoides pneumoniae)).